Consider the following 574-residue polypeptide: FAD-linked oxidoreductase sor8 (574 aa).

An N-terminal signal peptide occupies residues 1-27; that stretch reads MYAPPFVRAFGIAVLAVLPSFSSPATA. N-linked (GlcNAc...) asparagine glycans are attached at residues Asn58, Asn112, Asn136, Asn266, Asn312, Asn363, and Asn384. The FAD-binding PCMH-type domain maps to 126-305; that stretch reads VIGTYVQYAV…YSMTVKAHAN (180 aa).

It belongs to the oxygen-dependent FAD-linked oxidoreductase family. Requires FAD as cofactor.

It functions in the pathway secondary metabolite biosynthesis. Its function is as follows. FAD-linked oxidoreductase; part of the SOR gene cluster that mediates the biosynthesis of sorbicillinoids, a diverse group of yellow secondary metabolites that restrict growth of competing pathogenic fungi but not of bacteria. Sorbicillinoids biosynthesis requires the action of two PKSs. The SOR cluster is required for the production of trichodimerol and dihydrotrichotetronin, with sor2 being sufficient for production of trichodimerol, but not dihydrotrichotetronin in the light. Sor1 iteratively combines three acetyl units and the growing chain is modified by the ketoacyl reductase subunit, and optional by the enoyl reductase subunit in the second cycle. The polyketide is then handed over to the PKS sor2, which adds three more acetyl units, and two methyl groups. Sor2 releases an aldehyde, which undergoes spontaneous cyclization resulting in the formation of sorbicillin or 2',3'-dihydrosorbicillin. The monooxygenase sor5 oxidizes sorbicillin and 2',3'-dihydrosorbicillin to 2',3'-dihydrosorbicillinol and sorbicillinol, respectively. The oxidoreductase sor8 further converts sorbicillinol into oxosorbicillinol. Sorbicillinol is the building block for the other sorbicillinoids such as disorbicillinol, bisvertinolon, dihydrobisvertinolone, and dihydrotrichotetronine. This Hypocrea jecorina (strain QM6a) (Trichoderma reesei) protein is FAD-linked oxidoreductase sor8.